A 581-amino-acid chain; its full sequence is Proline--tRNA ligase (581 aa).

It belongs to the class-II aminoacyl-tRNA synthetase family. ProS type 1 subfamily. As to quaternary structure, homodimer.

The protein localises to the cytoplasm. It carries out the reaction tRNA(Pro) + L-proline + ATP = L-prolyl-tRNA(Pro) + AMP + diphosphate. Catalyzes the attachment of proline to tRNA(Pro) in a two-step reaction: proline is first activated by ATP to form Pro-AMP and then transferred to the acceptor end of tRNA(Pro). As ProRS can inadvertently accommodate and process non-cognate amino acids such as alanine and cysteine, to avoid such errors it has two additional distinct editing activities against alanine. One activity is designated as 'pretransfer' editing and involves the tRNA(Pro)-independent hydrolysis of activated Ala-AMP. The other activity is designated 'posttransfer' editing and involves deacylation of mischarged Ala-tRNA(Pro). The misacylated Cys-tRNA(Pro) is not edited by ProRS. The chain is Proline--tRNA ligase from Kosmotoga olearia (strain ATCC BAA-1733 / DSM 21960 / TBF 19.5.1).